Reading from the N-terminus, the 101-residue chain is Cilia- and flagella-associated protein 141 (101 aa).

Microtubule inner protein component of sperm flagellar doublet microtubules.

It is found in the cytoplasm. Its subcellular location is the cytoskeleton. It localises to the cilium axoneme. The protein resides in the flagellum axoneme. Functionally, microtubule inner protein (MIP) part of the dynein-decorated doublet microtubules (DMTs) in cilia axoneme, which is required for motile cilia beating. This Mus musculus (Mouse) protein is Cilia- and flagella-associated protein 141.